A 693-amino-acid polypeptide reads, in one-letter code: Transcription activator of gluconeogenesis BC1G_14637 (693 aa).

The segment covering 1–12 has biased composition (acidic residues); the sequence is MSGETEIDDPEV. Positions 1–75 are disordered; it reads MSGETEIDDP…KFDPKDPLRP (75 aa). Residues 21-49 are compositionally biased toward basic and acidic residues; it reads YSDHEQELDVIGKEGDNQEMAEQKVRPDG. Positions 52 to 62 are enriched in polar residues; the sequence is NGNTVGATATV. Residues 65–74 are compositionally biased toward basic and acidic residues; the sequence is PKFDPKDPLR. Residues 84 to 112 constitute a DNA-binding region (zn(2)-C6 fungal-type); the sequence is CFACQRAHLTCGDERPCQRCIKRGLADAC. Polar residues-rich tracts occupy residues 144-155 and 275-287; these read SSNRATAASTPT and SAETPPQDSSAGM. Disordered stretches follow at residues 144–170, 273–299, 350–413, and 531–567; these read SSNRATAASTPTEPSPGMGNFFSQPDT, SGSAETPPQDSSAGMPQNVGDLGFSNN, TSGS…RNRD, and NLNTNTGSGGPPSSGSSGRGSFTTPRMRPVNLADSNP. Residues 356–367 are compositionally biased toward low complexity; sequence SPSTDASPAAST. Over residues 369–379 the composition is skewed to polar residues; the sequence is GFESSPTTTNY. Residues 394 to 408 show a composition bias toward low complexity; it reads KSGPSGKLGPSGILG.

The protein belongs to the ERT1/acuK family.

It is found in the nucleus. In terms of biological role, transcription factor which regulates nonfermentable carbon utilization. Activator of gluconeogenetic genes. The sequence is that of Transcription activator of gluconeogenesis BC1G_14637 from Botryotinia fuckeliana (strain B05.10) (Noble rot fungus).